Here is a 348-residue protein sequence, read N- to C-terminus: Fructose-1,6-bisphosphatase class 1 (348 aa).

4 residues coordinate Mg(2+): Glu-92, Asp-111, Leu-113, and Asp-114. Residues 114–117 (DGSS) and Asn-204 each bind substrate. Glu-276 is a binding site for Mg(2+).

This sequence belongs to the FBPase class 1 family. As to quaternary structure, homotetramer. It depends on Mg(2+) as a cofactor.

It is found in the cytoplasm. The catalysed reaction is beta-D-fructose 1,6-bisphosphate + H2O = beta-D-fructose 6-phosphate + phosphate. It participates in carbohydrate biosynthesis; gluconeogenesis. This chain is Fructose-1,6-bisphosphatase class 1, found in Methylorubrum extorquens (strain PA1) (Methylobacterium extorquens).